The following is a 195-amino-acid chain: Xanthine phosphoribosyltransferase (195 aa).

Positions 20 and 27 each coordinate xanthine. Residue 128 to 132 (ANGQA) coordinates 5-phospho-alpha-D-ribose 1-diphosphate. Lys156 contacts xanthine.

Belongs to the purine/pyrimidine phosphoribosyltransferase family. Xpt subfamily. As to quaternary structure, homodimer.

The protein localises to the cytoplasm. It catalyses the reaction XMP + diphosphate = xanthine + 5-phospho-alpha-D-ribose 1-diphosphate. Its pathway is purine metabolism; XMP biosynthesis via salvage pathway; XMP from xanthine: step 1/1. Its function is as follows. Converts the preformed base xanthine, a product of nucleic acid breakdown, to xanthosine 5'-monophosphate (XMP), so it can be reused for RNA or DNA synthesis. The chain is Xanthine phosphoribosyltransferase from Lactiplantibacillus plantarum (strain ATCC BAA-793 / NCIMB 8826 / WCFS1) (Lactobacillus plantarum).